The chain runs to 255 residues: MKRKVQVKNITIGEGRPKICVPIIGKNKKDIIKEAKELKDACLDIIEWRVDFFENVENIKEVKEVLYELRSYIHDIPLLFTFRSVVEGGEKLISRDYYTTLNKEISNTGLVDLIDVELFMGDEVIDEVVNFAHKKEVKVIISNHDFNKTPKKEEIVSRLCRMQELGADLPKIAVMPQNEKDVLVLLEATNEMFKIYADRPIITMSMSGMGVISRLCGEIFGSALTFGAAKSVSAPGQISFKELNSVLNLLHKSIN.

3-dehydroquinate-binding positions include Glu-47–Arg-49 and Arg-83. Catalysis depends on His-144, which acts as the Proton donor/acceptor. Residue Lys-171 is the Schiff-base intermediate with substrate of the active site. 3 residues coordinate 3-dehydroquinate: Arg-214, Ser-233, and Gln-237.

The protein belongs to the type-I 3-dehydroquinase family. Homodimer or homotetramer.

It carries out the reaction 3-dehydroquinate = 3-dehydroshikimate + H2O. The protein operates within metabolic intermediate biosynthesis; chorismate biosynthesis; chorismate from D-erythrose 4-phosphate and phosphoenolpyruvate: step 3/7. Functionally, involved in the third step of the chorismate pathway, which leads to the biosynthesis of aromatic amino acids. Catalyzes the cis-dehydration of 3-dehydroquinate (DHQ) and introduces the first double bond of the aromatic ring to yield 3-dehydroshikimate. The reaction involves the formation of an imine intermediate between the keto group of 3-dehydroquinate and the epsilon-amino group of Lys-170 at the active site. This Clostridioides difficile (strain 630) (Peptoclostridium difficile) protein is 3-dehydroquinate dehydratase.